The sequence spans 404 residues: Probable tRNA sulfurtransferase (404 aa).

Residues 60 to 165 (QPIVEALKLV…DEAAYISYEE (106 aa)) enclose the THUMP domain. ATP is bound by residues 183–184 (ML), 208–209 (HF), arginine 265, glycine 287, and glutamine 296.

The protein belongs to the ThiI family.

The protein resides in the cytoplasm. It catalyses the reaction [ThiI sulfur-carrier protein]-S-sulfanyl-L-cysteine + a uridine in tRNA + 2 reduced [2Fe-2S]-[ferredoxin] + ATP + H(+) = [ThiI sulfur-carrier protein]-L-cysteine + a 4-thiouridine in tRNA + 2 oxidized [2Fe-2S]-[ferredoxin] + AMP + diphosphate. The catalysed reaction is [ThiS sulfur-carrier protein]-C-terminal Gly-Gly-AMP + S-sulfanyl-L-cysteinyl-[cysteine desulfurase] + AH2 = [ThiS sulfur-carrier protein]-C-terminal-Gly-aminoethanethioate + L-cysteinyl-[cysteine desulfurase] + A + AMP + 2 H(+). Its pathway is cofactor biosynthesis; thiamine diphosphate biosynthesis. Its function is as follows. Catalyzes the ATP-dependent transfer of a sulfur to tRNA to produce 4-thiouridine in position 8 of tRNAs, which functions as a near-UV photosensor. Also catalyzes the transfer of sulfur to the sulfur carrier protein ThiS, forming ThiS-thiocarboxylate. This is a step in the synthesis of thiazole, in the thiamine biosynthesis pathway. The sulfur is donated as persulfide by IscS. This Streptococcus pyogenes serotype M3 (strain ATCC BAA-595 / MGAS315) protein is Probable tRNA sulfurtransferase.